Reading from the N-terminus, the 430-residue chain is POU domain, class 2, transcription factor 3 (430 aa).

Disordered regions lie at residues 1–40, 60–81, 129–180, and 248–267; these read MVNL…NGLD, HRPC…SGDM, LLLP…EPTD, and DAES…YPTL. 2 stretches are compositionally biased toward polar residues: residues 23–32 and 67–78; these read ARSTFGQVES and QGPTMMPGNQMS. A compositionally biased stretch (low complexity) spans 129–139; the sequence is LLLPQTGPGLT. Residues 176-250 form the POU-specific domain; it reads DEPTDLEELE…LLEKWLNDAE (75 aa). Over residues 251 to 267 the composition is skewed to low complexity; that stretch reads SSPSDPSASTPSSYPTL. A DNA-binding region (homeobox) is located at residues 274 to 333; that stretch reads KRKKRTSIETNIRLTLEKRFQDNPKPSSEEISMIAEQLSMEKEVVRVWFCNRRQKEKRIN. Composition is skewed to low complexity over residues 355 to 364 and 374 to 390; these read SLGSLSVPPV and SSCS…PGSG. Residues 355–413 form a disordered region; the sequence is SLGSLSVPPVHSTMPGTVTSSCSPGNNSRPSSPGSGLHASSPTASQNNSKAAMNPSSAA. Polar residues predominate over residues 392-413; sequence HASSPTASQNNSKAAMNPSSAA.

This sequence belongs to the POU transcription factor family. Class-2 subfamily. Interacts (via the POU domain) with POU2AF1 and POU2AF2 in a DNA-dependent manner; this interaction recruits POU2AF2 to chromatin and increases POU2F3 transactivation activity. Expressed in epidermis and hair follicles.

Its subcellular location is the nucleus. Functionally, transcription factor that binds to the octamer motif (5'-ATTTGCAT-3') and regulates cell type-specific differentiation pathways. Involved in the regulation of keratinocytes differentiation. The POU2F3-POU2AF2/POU2AF3 complex drives the expression of tuft-cell-specific genes, a rare chemosensory cells that coordinate immune and neural functions within mucosal epithelial tissues. Inhibits transactivation by POU2F1. This chain is POU domain, class 2, transcription factor 3 (Pou2f3), found in Rattus norvegicus (Rat).